The following is a 177-amino-acid chain: MLKDLYKSHIVPSLKTKLGYSNVMQVPKIVKVCLNIGLGIRGSDSKVMNSCVRDLALIAGQKPVATYAKKSIAGFKIRKGFPIGCKVTLRNNKMYEFLERLIHVVLPREQDFKGLSVNQFDGCGNLSIGIKEHISFLEIDYDKIDKILGLDINIVTNAVNNNDAKLLLMEFGFPFIN.

It belongs to the universal ribosomal protein uL5 family. As to quaternary structure, part of the 50S ribosomal subunit; part of the 5S rRNA/L5/L18/L25 subcomplex. Contacts the 5S rRNA and the P site tRNA. Forms a bridge to the 30S subunit in the 70S ribosome.

Its function is as follows. This is one of the proteins that bind and probably mediate the attachment of the 5S RNA into the large ribosomal subunit, where it forms part of the central protuberance. In the 70S ribosome it contacts protein S13 of the 30S subunit (bridge B1b), connecting the 2 subunits; this bridge is implicated in subunit movement. Contacts the P site tRNA; the 5S rRNA and some of its associated proteins might help stabilize positioning of ribosome-bound tRNAs. This Ehrlichia canis (strain Jake) protein is Large ribosomal subunit protein uL5.